The primary structure comprises 24 residues: FLPIIASVAAKVFSKIFCAISKKC.

Cysteines 18 and 24 form a disulfide.

In terms of tissue distribution, expressed by the skin glands.

Its subcellular location is the secreted. Antibacterial activity against Gram-positive bacterium S.aureus and Gram-negative bacterium E.coli. Has activity against C.albicans. The polypeptide is Brevinin-1Pc (Lithobates pipiens (Northern leopard frog)).